The primary structure comprises 338 residues: Adenylosuccinate synthetase (338 aa).

GTP contacts are provided by residues 12 to 18 (GDEGKGK) and 42 to 44 (GHT). The active-site Proton acceptor is Asp13. Mg(2+) is bound by residues Asp13 and Gly42. IMP contacts are provided by residues 13–16 (DEGK), 40–43 (NAGH), Thr127, Arg141, Gln179, Thr194, and Arg256. The Proton donor role is filled by His43. Substrate is bound at residue 252–258 (TVTGRRR). Residues Arg258, 284–286 (CLD), and 324–326 (STG) each bind GTP.

The protein belongs to the adenylosuccinate synthetase family. As to quaternary structure, homodimer. The cofactor is Mg(2+).

The protein resides in the cytoplasm. It catalyses the reaction IMP + L-aspartate + GTP = N(6)-(1,2-dicarboxyethyl)-AMP + GDP + phosphate + 2 H(+). The protein operates within purine metabolism; AMP biosynthesis via de novo pathway; AMP from IMP: step 1/2. Plays an important role in the de novo pathway of purine nucleotide biosynthesis. Catalyzes the first committed step in the biosynthesis of AMP from IMP. This chain is Adenylosuccinate synthetase, found in Methanococcus maripaludis (strain DSM 14266 / JCM 13030 / NBRC 101832 / S2 / LL).